Reading from the N-terminus, the 537-residue chain is Cryptic loci regulator 2 (537 aa).

The tract at residues 96–116 (VSARHVRPNPKSSKDTLEKQP) is disordered. Over residues 107-116 (SSKDTLEKQP) the composition is skewed to basic and acidic residues.

As to quaternary structure, interacts with clr3.

It is found in the nucleus. It localises to the chromosome. The protein localises to the centromere. The protein resides in the telomere. Its function is as follows. Required for deacetylation in the mating-type region and the centromere. Acts upstream of the histone deacetylases to promote transcriptional silencing. Required for proper positioning of nucleosomes at heterochromatic loci and for transcriptional gene silencing (TGS) function of the Snf2/Hdac-containing repressor complex (SHREC). The protein is Cryptic loci regulator 2 (clr2) of Schizosaccharomyces pombe (strain 972 / ATCC 24843) (Fission yeast).